The primary structure comprises 193 residues: Probable nicotinate-nucleotide adenylyltransferase (193 aa).

This sequence belongs to the NadD family.

The catalysed reaction is nicotinate beta-D-ribonucleotide + ATP + H(+) = deamido-NAD(+) + diphosphate. It functions in the pathway cofactor biosynthesis; NAD(+) biosynthesis; deamido-NAD(+) from nicotinate D-ribonucleotide: step 1/1. In terms of biological role, catalyzes the reversible adenylation of nicotinate mononucleotide (NaMN) to nicotinic acid adenine dinucleotide (NaAD). This chain is Probable nicotinate-nucleotide adenylyltransferase, found in Flavobacterium johnsoniae (strain ATCC 17061 / DSM 2064 / JCM 8514 / BCRC 14874 / CCUG 350202 / NBRC 14942 / NCIMB 11054 / UW101) (Cytophaga johnsonae).